We begin with the raw amino-acid sequence, 159 residues long: 17 kDa surface antigen (159 aa).

A signal peptide spans 1 to 19 (MKIISKIIVILLAASMLQA). Cys20 carries the N-palmitoyl cysteine lipid modification. Cys20 is lipidated: S-diacylglycerol cysteine.

This sequence belongs to the rickettsiale 17 kDa surface antigen family.

It localises to the cell outer membrane. This chain is 17 kDa surface antigen (omp), found in Rickettsia bellii.